Reading from the N-terminus, the 1712-residue chain is Collagen alpha-2(IV) chain (1712 aa).

The signal sequence occupies residues 1–25 (MGRDQRAVAGPALRRWLLLGTVTVG). A propeptide spans 26–183 (FLAQSVLAGV…LPKEERDRYR (158 aa)) (N-terminal propeptide (7S domain)). Disordered stretches follow at residues 60–237 (RGQP…GFYG), 302–448 (GLRG…PDGF), 507–640 (INGE…DAGL), 690–906 (GLPG…SPGF), and 1157–1480 (TGPP…GLPG). Residues 68–84 (PQGYNGPPGLQGFPGLQ) show a composition bias toward low complexity. The segment covering 121-130 (GHPGQGGPRG) has biased composition (gly residues). A glycan (N-linked (GlcNAc...) asparagine) is linked at Asn-138. A compositionally biased stretch (low complexity) spans 140-153 (TQGDSGPQGPPGSE). Over residues 175–186 (PKEERDRYRGEP) the composition is skewed to basic and acidic residues. Residues 184 to 1484 (GEPGEPGLVG…SPGLPGMPGR (1301 aa)) are triple-helical region. Composition is skewed to pro residues over residues 215–224 (RPGPPGPPGP) and 433–445 (PPGP…PPGP). Composition is skewed to basic and acidic residues over residues 511–520 (PGRKGDRGDP) and 571–582 (KGDDGSPGRDGL). Composition is skewed to low complexity over residues 628 to 640 (LKGQ…DAGL) and 698 to 710 (TGAK…PGFA). Residues 711–720 (GADGGPGPRG) show a composition bias toward gly residues. The segment covering 721–730 (LPGDAGREGF) has biased composition (low complexity). Residues 752-766 (DGSPGPIGLPGPDGP) show a composition bias toward pro residues. Composition is skewed to low complexity over residues 769–778 (ERGLPGEVLG), 813–823 (MPGMPGLKGQP), 831–844 (QPGL…HGFP), 1302–1328 (GSAA…KGWA), and 1400–1421 (QPGT…EMGP). Residues 1489 to 1712 (GYLLVKHSQT…SRCQVCMKNL (224 aa)) form the Collagen IV NC1 domain. A 3'-bromotyrosine modification is found at Tyr-1490. 6 cysteine pairs are disulfide-bonded: Cys-1504–Cys-1593, Cys-1537–Cys-1590, Cys-1549–Cys-1555, Cys-1612–Cys-1708, Cys-1646–Cys-1705, and Cys-1658–Cys-1665.

This sequence belongs to the type IV collagen family. As to quaternary structure, there are six type IV collagen isoforms, alpha 1(IV)-alpha 6(IV), each of which can form a triple helix structure with 2 other chains to generate type IV collagen network. Interacts with EFEMP2. Prolines at the third position of the tripeptide repeating unit (G-X-Y) are hydroxylated in some or all of the chains. Post-translationally, type IV collagens contain numerous cysteine residues which are involved in inter- and intramolecular disulfide bonding. 12 of these, located in the NC1 domain, are conserved in all known type IV collagens. In terms of processing, the trimeric structure of the NC1 domains is stabilized by covalent bonds between Lys and Met residues. Proteolytic processing produces the C-terminal NC1 peptide, canstatin.

It is found in the secreted. Its subcellular location is the extracellular space. The protein resides in the extracellular matrix. It localises to the basement membrane. Functionally, type IV collagen is the major structural component of glomerular basement membranes (GBM), forming a 'chicken-wire' meshwork together with laminins, proteoglycans and entactin/nidogen. In terms of biological role, canstatin, a cleavage product corresponding to the collagen alpha 2(IV) NC1 domain, possesses both anti-angiogenic and anti-tumor cell activity. It inhibits proliferation and migration of endothelial cells, reduces mitochondrial membrane potential, and induces apoptosis. Specifically induces Fas-dependent apoptosis and activates procaspase-8 and -9 activity. Ligand for alphavbeta3 and alphavbeta5 integrins. The chain is Collagen alpha-2(IV) chain from Homo sapiens (Human).